The sequence spans 177 residues: Large ribosomal subunit protein uL5c (177 aa).

This sequence belongs to the universal ribosomal protein uL5 family. In terms of assembly, part of the 50S ribosomal subunit; contacts the 5S rRNA.

The protein resides in the plastid. Its subcellular location is the chloroplast. In terms of biological role, binds 5S rRNA, forms part of the central protuberance of the 50S subunit. This Cyanidioschyzon merolae (strain NIES-3377 / 10D) (Unicellular red alga) protein is Large ribosomal subunit protein uL5c (rpl5).